Reading from the N-terminus, the 227-residue chain is Orotidine 5'-phosphate decarboxylase (227 aa).

Substrate-binding positions include Asp8, Lys30, 57–66 (DLKFHDIPNT), Thr116, Arg177, Gln186, Gly206, and Arg207. Lys59 acts as the Proton donor in catalysis.

This sequence belongs to the OMP decarboxylase family. Type 1 subfamily. In terms of assembly, homodimer.

The catalysed reaction is orotidine 5'-phosphate + H(+) = UMP + CO2. It participates in pyrimidine metabolism; UMP biosynthesis via de novo pathway; UMP from orotate: step 2/2. Its function is as follows. Catalyzes the decarboxylation of orotidine 5'-monophosphate (OMP) to uridine 5'-monophosphate (UMP). The chain is Orotidine 5'-phosphate decarboxylase from Acinetobacter baumannii (strain AB307-0294).